The following is a 378-amino-acid chain: POU domain, class 3, transcription factor 2 (378 aa).

3 disordered regions span residues 1 to 28, 86 to 118, and 151 to 205; these read MATTASNHYNILTSSPSIVHSEPGSMQQ, SPRDEMHNSSNLQHQSRPPHLVHQTHGNHHDSR, and LIPG…TPTS. Residues 164 to 181 show a composition bias toward basic and acidic residues; the sequence is MRDAHEDHHSPHLSDHGH. One can recognise a POU-specific domain in the interval 200–274; the sequence is EDTPTSDDLE…LLNKWLEEAD (75 aa). A Phosphoserine modification is found at Ser-279. The segment at residues 292–351 is a DNA-binding region (homeobox); it reads KRKKRTSIEVSVKGALESHFLKCPKPAASEITSLADSLQLEKEVVRVWFCNRRQKEKRMT. The interval 347 to 378 is disordered; that stretch reads EKRMTPPGGPLPGTEDVYGDTPPHHGVQTPVQ.

It belongs to the POU transcription factor family. Class-3 subfamily. In terms of tissue distribution, predominantly expressed in the central nervous system, with strong expression in the cerebellum.

It localises to the nucleus. In terms of biological role, transcription factor that may play important roles in patterning the embryonic brain. In Danio rerio (Zebrafish), this protein is POU domain, class 3, transcription factor 2 (pou3f2).